Reading from the N-terminus, the 441-residue chain is Serine/threonine-protein phosphatase 4 regulatory subunit 2 (441 aa).

The segment covering 201-213 (DEEEGFFDGDEDR) has biased composition (acidic residues). 3 disordered regions span residues 201 to 220 (DEEE…NKSK), 242 to 348 (INDD…LTTP), and 364 to 418 (SPSS…SQED). Over residues 249–261 (NKGQNCQSDVTKN) the composition is skewed to polar residues. The segment covering 264–302 (DDEDDDDNDDDYREDGADEDDEDDDHMGSTDDDEDDDED) has biased composition (acidic residues). T347 bears the Phosphothreonine mark. A compositionally biased stretch (basic and acidic residues) spans 388 to 398 (EDAHENHEGRS).

The protein belongs to the PPP4R2 family. Regulatory subunit (R2) of the histone H2A phosphatase complex (HTP-C) consisting of PPH3, PSY2 and PSY4. Interacts with SPT4 and SPT5.

It is found in the nucleus. Its function is as follows. Regulatory subunit of the histone H2A phosphatase complex, which dephosphorylates H2AS128ph (gamma-H2A) that has been displaced from sites of DNA lesions in the double-stranded DNA break repair process. Dephosphorylation is necessary for efficient recovery from the DNA damage checkpoint. In Saccharomyces cerevisiae (strain ATCC 204508 / S288c) (Baker's yeast), this protein is Serine/threonine-protein phosphatase 4 regulatory subunit 2 (PSY4).